Consider the following 331-residue polypeptide: Ketol-acid reductoisomerase (NADP(+)) (331 aa).

Residues 2 to 182 (ARMYYDEDGN…GGTRAGILET (181 aa)) enclose the KARI N-terminal Rossmann domain. Residues 25-28 (YGSQ), serine 51, serine 53, and 83-86 (DEVQ) contribute to the NADP(+) site. The active site involves histidine 108. Position 134 (glycine 134) interacts with NADP(+). One can recognise a KARI C-terminal knotted domain in the interval 183–328 (SFREETETDL…KDLRAMFSWL (146 aa)). Residues aspartate 191, glutamate 195, glutamate 227, and glutamate 231 each coordinate Mg(2+). Serine 252 is a binding site for substrate.

Belongs to the ketol-acid reductoisomerase family. Mg(2+) is required as a cofactor.

It catalyses the reaction (2R)-2,3-dihydroxy-3-methylbutanoate + NADP(+) = (2S)-2-acetolactate + NADPH + H(+). The enzyme catalyses (2R,3R)-2,3-dihydroxy-3-methylpentanoate + NADP(+) = (S)-2-ethyl-2-hydroxy-3-oxobutanoate + NADPH + H(+). Its pathway is amino-acid biosynthesis; L-isoleucine biosynthesis; L-isoleucine from 2-oxobutanoate: step 2/4. It functions in the pathway amino-acid biosynthesis; L-valine biosynthesis; L-valine from pyruvate: step 2/4. Functionally, involved in the biosynthesis of branched-chain amino acids (BCAA). Catalyzes an alkyl-migration followed by a ketol-acid reduction of (S)-2-acetolactate (S2AL) to yield (R)-2,3-dihydroxy-isovalerate. In the isomerase reaction, S2AL is rearranged via a Mg-dependent methyl migration to produce 3-hydroxy-3-methyl-2-ketobutyrate (HMKB). In the reductase reaction, this 2-ketoacid undergoes a metal-dependent reduction by NADPH to yield (R)-2,3-dihydroxy-isovalerate. The chain is Ketol-acid reductoisomerase (NADP(+)) from Gloeothece citriformis (strain PCC 7424) (Cyanothece sp. (strain PCC 7424)).